Consider the following 486-residue polypeptide: Protein pleiotropic regulatory locus 1 (486 aa).

The interval 62–101 (EPVVSQPPRQPDRINEQPGPSNALSLAAPEGSKSTQKGAT) is disordered. 7 WD repeats span residues 174-204 (GHLGWVRSVAFDPSNEWFCTGSADRTIKIWD), 216-246 (GHIEQVRGLAVSNRHTYMFSAGDDKQVKCWD), 258-288 (GHLSGVYCLALHPTLDVLLTGGRDSVCRVWD), 300-330 (GHDNTVCSVFTRPTDPQVVTGSHDTTIKFWD), 342-371 (HHKKSVRAMTLHPKENAFASASADNTKKFS), 384-413 (QQKTIINAMAVNEDGVMVTGGDNGSIWFWD), and 433-463 (ESEAGIYAACYDNTGSRLVTCEADKTIKMWK). 2 consecutive short sequence motifs (DWD box) follow at residues 275–290 (LLTGGRDSVCRVWDIR) and 317–332 (VVTGSHDTTIKFWDLR). Residues 465–486 (DENATPETHPINFKPPKEIRRF) are disordered.

Belongs to the WD repeat PRL1/PRL2 family. As to quaternary structure, component of the multiprotein assembly MOS4-associated complex (MAC) at least composed of MOS4, CDC5, PRL1 and PRP19. Interacts with CDC5. Component of the CUL4-RBX1-DDB1-PRL1 E3 ubiquitin-protein ligase complex. Interacts with DDB1A through its DWD motif. Interacts with AKIN10, AKIN11 and PIPC. Interacts with KAP2.

The protein resides in the nucleus. Its pathway is protein modification; protein ubiquitination. Pleiotropic regulator of glucose, stress and hormone responses. Also regulates cytochrome P450 CYP90A1/CPD. Coordinates the expression of hormone- and stress-related genes and genes related to cell wall modification and growth, leading to altered sugar-dependent growth and developmental responses. Component of the MAC complex that probably regulates defense responses through transcriptional control and thereby is essential for plant innate immunity. By suppressing the expression of several (1)O(2)-responsive genes, PRL1 seems to play a major role in modulating responses of plants to environmental changes by interconnecting (1)O(2)-mediated retrograde signaling with other signaling pathways. Acts as a negative regulator of SNF1-related protein kinases AKIN10 and AKIN11 via the inhibition of their interaction with SKP1/ASK1. Component of the CUL4-RBX1-DDB1-PRL1 E3 ubiquitin-protein ligase complex, PRL1 may function as the substrate recognition module within this complex, leading to the AKIN10 degradation. The polypeptide is Protein pleiotropic regulatory locus 1 (PRL1) (Arabidopsis thaliana (Mouse-ear cress)).